The sequence spans 570 residues: 4-coumarate--CoA ligase 4 (570 aa).

The ATP site is built by S218, S219, G220, T221, T222, and K226. Y268 provides a ligand contact to (E)-4-coumaroyl-AMP. R289 lines the CoA pocket. The tract at residues 291-360 (ELNLVMELIQ…LKFPNAIFGQ (70 aa)) is SBD1. Positions 338, 360, 361, and 365 each coordinate (E)-4-coumaroyl-AMP. The ATP site is built by Q360, G361, T365, D448, and R463. The tract at residues 361–427 (GYGMTESGTV…VRGHQLMKGY (67 aa)) is SBD2. (E)-4-coumaroyl-AMP-binding residues include K465 and K469. CoA is bound by residues K471 and G472. K554 lines the ATP pocket.

It belongs to the ATP-dependent AMP-binding enzyme family. Mg(2+) serves as cofactor.

It carries out the reaction (E)-sinapate + ATP + CoA = (E)-sinapoyl-CoA + AMP + diphosphate. It catalyses the reaction (E)-4-coumarate + ATP + CoA = (E)-4-coumaroyl-CoA + AMP + diphosphate. The catalysed reaction is (E)-caffeate + ATP + CoA = (E)-caffeoyl-CoA + AMP + diphosphate. The enzyme catalyses (E)-ferulate + ATP + CoA = (E)-feruloyl-CoA + AMP + diphosphate. It carries out the reaction (E)-sinapate + ATP + H(+) = (E)-sinapoyl-AMP + diphosphate. It catalyses the reaction (E)-sinapoyl-AMP + CoA = (E)-sinapoyl-CoA + AMP + H(+). The catalysed reaction is (E)-4-coumarate + ATP + H(+) = (E)-4-coumaroyl-AMP + diphosphate. The enzyme catalyses (E)-4-coumaroyl-AMP + CoA = (E)-4-coumaroyl-CoA + AMP + H(+). It carries out the reaction (E)-caffeate + ATP + H(+) = (E)-caffeoyl-AMP + diphosphate. It catalyses the reaction (E)-caffeoyl-AMP + CoA = (E)-caffeoyl-CoA + AMP + H(+). The catalysed reaction is (E)-ferulate + ATP + H(+) = (E)-feruloyl-AMP + diphosphate. The enzyme catalyses (E)-feruloyl-AMP + CoA = (E)-feruloyl-CoA + AMP + H(+). It functions in the pathway phytoalexin biosynthesis; 3,4',5-trihydroxystilbene biosynthesis; 3,4',5-trihydroxystilbene from trans-4-coumarate: step 1/2. Functionally, produces CoA thioesters of a variety of hydroxy- and methoxy-substituted cinnamic acids, which are used to synthesize several phenylpropanoid-derived compounds, including anthocyanins, flavonoids, isoflavonoids, coumarins, lignin, suberin and wall-bound phenolics. Follows a two-step reaction mechanism, wherein the carboxylate substrate first undergoes adenylation by ATP, followed by a thioesterification in the presence of CoA to yield the final CoA thioesters. The sequence is that of 4-coumarate--CoA ligase 4 from Arabidopsis thaliana (Mouse-ear cress).